The primary structure comprises 151 residues: Ribosome maturation factor RimP (151 aa).

Belongs to the RimP family.

It is found in the cytoplasm. Its function is as follows. Required for maturation of 30S ribosomal subunits. In Shewanella halifaxensis (strain HAW-EB4), this protein is Ribosome maturation factor RimP.